The primary structure comprises 166 residues: Small ribosomal subunit protein uS5 (166 aa).

The 64-residue stretch at 12–75 (YIEKLVQVNR…EAARRNMIQV (64 aa)) folds into the S5 DRBM domain.

The protein belongs to the universal ribosomal protein uS5 family. In terms of assembly, part of the 30S ribosomal subunit. Contacts proteins S4 and S8.

In terms of biological role, with S4 and S12 plays an important role in translational accuracy. Its function is as follows. Located at the back of the 30S subunit body where it stabilizes the conformation of the head with respect to the body. This is Small ribosomal subunit protein uS5 from Pseudomonas fluorescens (strain Pf0-1).